Reading from the N-terminus, the 102-residue chain is Nucleoid-associated protein BCc_301 (102 aa).

The protein belongs to the YbaB/EbfC family. As to quaternary structure, homodimer.

Its subcellular location is the cytoplasm. It localises to the nucleoid. In terms of biological role, binds to DNA and alters its conformation. May be involved in regulation of gene expression, nucleoid organization and DNA protection. The chain is Nucleoid-associated protein BCc_301 from Buchnera aphidicola subsp. Cinara cedri (strain Cc).